The chain runs to 96 residues: Protein transport protein Sec61 subunit beta (96 aa).

Positions 1–17 are enriched in polar residues; the sequence is MPGPTPSGTNVGSSGRS. The tract at residues 1–54 is disordered; that stretch reads MPGPTPSGTNVGSSGRSPSKAVAARAAGSTVRQRKNASCGTRSAGRTTSAGTGG. P2 is modified (N-acetylproline). The Cytoplasmic portion of the chain corresponds to 2–71; the sequence is PGPTPSGTNV…DSPGLKVGPV (70 aa). S7 carries the post-translational modification Phosphoserine. T9 carries the phosphothreonine modification. A phosphoserine mark is found at S13, S14, and S17. C39 carries S-palmitoyl cysteine lipidation. The span at 40–50 shows a compositional bias: low complexity; sequence GTRSAGRTTSA. The helical transmembrane segment at 72 to 91 threads the bilayer; that stretch reads PVLVMSLLFIASVFMLHIWG. The Lumenal portion of the chain corresponds to 92 to 96; sequence KYTRS.

It belongs to the SEC61-beta family. The SEC61 channel-forming translocon complex consists of channel-forming core components SEC61A1, SEC61B and SEC61G and different auxiliary components such as SEC62 and SEC63. The SEC61 channel associates with the multi-pass translocon (MPT) complex. Interacts with TRAM1.

The protein resides in the endoplasmic reticulum membrane. Its function is as follows. Component of SEC61 channel-forming translocon complex that mediates transport of signal peptide-containing precursor polypeptides across the endoplasmic reticulum (ER). Forms a ribosome receptor and a gated pore in the ER membrane, both functions required for cotranslational translocation of nascent polypeptides. The SEC61 channel is also involved in ER membrane insertion of transmembrane proteins: it mediates membrane insertion of the first few transmembrane segments of proteins, while insertion of subsequent transmembrane regions of multi-pass membrane proteins is mediated by the multi-pass translocon (MPT) complex. The SEC61 channel cooperates with the translocating protein TRAM1 to import nascent proteins into the ER. The polypeptide is Protein transport protein Sec61 subunit beta (SEC61B) (Canis lupus familiaris (Dog)).